The sequence spans 1203 residues: Kinesin-like protein KIN-14Q (1203 aa).

The segment at 1–28 (MEDCCDPLLATDASPRPESFSRSEKDIA) is disordered. The segment covering 19–28 (SFSRSEKDIA) has biased composition (basic and acidic residues). Residues 336–395 (ENLVCRAEEEAEGMRSDCEQQRKEMEDMKRMVEELKLENQQKTRECEEALNSLSEIQNEL) are a coiled coil. Residues 499–825 (NIRVFCRCRP…LNFASRVRGI (327 aa)) enclose the Kinesin motor domain. 582-589 (GQTGTGKT) provides a ligand contact to ATP. Residues 846–901 (VEKWKQDMKGKDEQIRKMEETMYGLEAKIKERDTKNKTLQDKVKELESQLLVERKL) are a coiled coil. A disordered region spans residues 907-931 (DTKIAEQQTKQQTEDENNTSKRPPL).

This sequence belongs to the TRAFAC class myosin-kinesin ATPase superfamily. Kinesin family. KIN-14 subfamily.

The sequence is that of Kinesin-like protein KIN-14Q from Arabidopsis thaliana (Mouse-ear cress).